Reading from the N-terminus, the 301-residue chain is uncharacterized protein (301 aa).

Active-site charge relay system residues include S44 and Y107. Y133 (proton donor) is an active-site residue. The Schiff-base intermediate with substrate role is filled by K162.

This sequence belongs to the DapA family. As to quaternary structure, homotetramer.

Its subcellular location is the cytoplasm. This is an uncharacterized protein from Pyrobaculum aerophilum (strain ATCC 51768 / DSM 7523 / JCM 9630 / CIP 104966 / NBRC 100827 / IM2).